The chain runs to 440 residues: MVFSTKLYTTKLLKKLADLRLAIWLLASIGILIALGTFIEQDQPLAFYQENYPTTAPILGFVDWKFITSLNLNTLYSNIWFFGIVGFFASSLLACTYTTQIPALKKFRLWEFITNFKSLRKFQLKRQLPRNLASTSVYQLYGKNYHVFRQGKKNYAYSGLLGRVGPILVHFSILFVLFGSACGALGGYTVQEIVPRGEIFHLQNLVKSGNLSKIPQYLSWRVNDFWITYTEEAKVNQFYSDLSILDVKGQEVKRKIIFVNEPLVYNGVSVYQTDWDILGLKLKLNDQQTIQVPLNKISKSGRNFWLGSVFLDGNSKQKITILLNDLTGNIYVYDNAGLLVATTKLGQLVVFPEDQSLRFQEFLTTTGLQLKEDPGLRLIYLSFFLVMVSIYISFLSYSQIWGFEKTDEFILAGKSNRAVLAFQEDFKKDVKEILNTLKFN.

3 helical membrane passes run 19-39 (LRLAIWLLASIGILIALGTFI), 78-98 (NIWFFGIVGFFASSLLACTYT), and 164-184 (VGPILVHFSILFVLFGSACGA).

It belongs to the Ccs1/CcsB family. May interact with CcsA.

The protein resides in the plastid. The protein localises to the chloroplast thylakoid membrane. Required during biogenesis of c-type cytochromes (cytochrome c6 and cytochrome f) at the step of heme attachment. In Emiliania huxleyi (Coccolithophore), this protein is Cytochrome c biogenesis protein Ccs1.